Reading from the N-terminus, the 187-residue chain is 2-oxoglutarate synthase subunit KorC (187 aa).

In terms of assembly, heterotetramer of the KorA, KorB, KorC and KorD subunits.

The enzyme catalyses 2 oxidized [2Fe-2S]-[ferredoxin] + 2-oxoglutarate + CoA = succinyl-CoA + 2 reduced [2Fe-2S]-[ferredoxin] + CO2 + H(+). In Archaeoglobus fulgidus (strain ATCC 49558 / DSM 4304 / JCM 9628 / NBRC 100126 / VC-16), this protein is 2-oxoglutarate synthase subunit KorC (korC).